Here is a 936-residue protein sequence, read N- to C-terminus: DNA topoisomerase 1 (936 aa).

The region spanning 15 to 139 (RRLVIVESPT…VKRMVFHEIT (125 aa)) is the Toprim domain. Mg(2+) contacts are provided by glutamate 21 and aspartate 108. The 458-residue stretch at 154–611 (DIALVDAQET…FYFGGEHGVE (458 aa)) folds into the Topo IA-type catalytic domain. Residues 188–193 (SAGRVQ) form an interaction with DNA region. Catalysis depends on tyrosine 339, which acts as the O-(5'-phospho-DNA)-tyrosine intermediate. 4 disordered regions span residues 661–688 (LERM…LTPD), 732–767 (VLPE…SLFR), 841–884 (KRRG…ETNA), and 903–936 (LLAD…AKKA). Residues 910 to 936 (RGPVKKKAPAKKAAKKAPAKKAAAKKA) are compositionally biased toward basic residues.

It belongs to the type IA topoisomerase family. As to quaternary structure, monomer. Requires Mg(2+) as cofactor.

The enzyme catalyses ATP-independent breakage of single-stranded DNA, followed by passage and rejoining.. Releases the supercoiling and torsional tension of DNA, which is introduced during the DNA replication and transcription, by transiently cleaving and rejoining one strand of the DNA duplex. Introduces a single-strand break via transesterification at a target site in duplex DNA. The scissile phosphodiester is attacked by the catalytic tyrosine of the enzyme, resulting in the formation of a DNA-(5'-phosphotyrosyl)-enzyme intermediate and the expulsion of a 3'-OH DNA strand. The free DNA strand then undergoes passage around the unbroken strand, thus removing DNA supercoils. Finally, in the religation step, the DNA 3'-OH attacks the covalent intermediate to expel the active-site tyrosine and restore the DNA phosphodiester backbone. In terms of biological role, relaxes negatively (but not positively) supercoiled DNA, concatanates and knots circular ssDNA at 52 but not 37 degrees Celsius. Preferentially nicks supercoiled DNA at C(G/T)CTT, cutting between the TT residues, binds ss and dsDNA with the recognition site. In Mycolicibacterium smegmatis (strain ATCC 700084 / mc(2)155) (Mycobacterium smegmatis), this protein is DNA topoisomerase 1.